The chain runs to 270 residues: 4-hydroxy-tetrahydrodipicolinate reductase (270 aa).

Position 7-12 (7-12 (GANGKM)) interacts with NAD(+). Arginine 34 contacts NADP(+). NAD(+) contacts are provided by residues 97–99 (GTT) and 121–124 (SGNM). Histidine 155 serves as the catalytic Proton donor/acceptor. Histidine 156 lines the (S)-2,3,4,5-tetrahydrodipicolinate pocket. Lysine 159 acts as the Proton donor in catalysis. A (S)-2,3,4,5-tetrahydrodipicolinate-binding site is contributed by 165–166 (GT).

The protein belongs to the DapB family.

It is found in the cytoplasm. It catalyses the reaction (S)-2,3,4,5-tetrahydrodipicolinate + NAD(+) + H2O = (2S,4S)-4-hydroxy-2,3,4,5-tetrahydrodipicolinate + NADH + H(+). The catalysed reaction is (S)-2,3,4,5-tetrahydrodipicolinate + NADP(+) + H2O = (2S,4S)-4-hydroxy-2,3,4,5-tetrahydrodipicolinate + NADPH + H(+). Its pathway is amino-acid biosynthesis; L-lysine biosynthesis via DAP pathway; (S)-tetrahydrodipicolinate from L-aspartate: step 4/4. Catalyzes the conversion of 4-hydroxy-tetrahydrodipicolinate (HTPA) to tetrahydrodipicolinate. The sequence is that of 4-hydroxy-tetrahydrodipicolinate reductase from Bartonella quintana (strain Toulouse) (Rochalimaea quintana).